We begin with the raw amino-acid sequence, 289 residues long: ATP synthase gamma chain (289 aa).

The protein belongs to the ATPase gamma chain family. As to quaternary structure, F-type ATPases have 2 components, CF(1) - the catalytic core - and CF(0) - the membrane proton channel. CF(1) has five subunits: alpha(3), beta(3), gamma(1), delta(1), epsilon(1). CF(0) has three main subunits: a, b and c.

The protein localises to the cell inner membrane. Produces ATP from ADP in the presence of a proton gradient across the membrane. The gamma chain is believed to be important in regulating ATPase activity and the flow of protons through the CF(0) complex. In Azorhizobium caulinodans (strain ATCC 43989 / DSM 5975 / JCM 20966 / LMG 6465 / NBRC 14845 / NCIMB 13405 / ORS 571), this protein is ATP synthase gamma chain.